The sequence spans 185 residues: uncharacterized protein (185 aa).

This is an uncharacterized protein from Trypanosoma brucei brucei.